A 380-amino-acid chain; its full sequence is RNA-binding motif protein, Y chromosome (380 aa).

An RRM domain is found at Gly8–Arg86. 2 disordered regions span residues Lys82 to Arg226 and His279 to Ser358. The span at Arg166–Gly178 shows a compositional bias: polar residues. Composition is skewed to basic and acidic residues over residues Arg180 to Ser190 and Ile333 to Lys351.

Interacts with SRSF3/SRP20, SRSF9/SRP30, SRSF5/SRP40, and SRSF6/SRP55; this interaction inhibits SRSF family member pre-mRNA splicing. Interacts with splicing factor proteins and KHDRBS3. As to expression, testis-specific.

The protein resides in the nucleus. Its function is as follows. RNA-binding protein involved in pre-mRNA splicing. Required for sperm development. Acts additively with TRA2B to promote exon 7 inclusion of the survival motor neuron SMN. Binds non-specifically to mRNAs. This chain is RNA-binding motif protein, Y chromosome, found in Mus musculus (Mouse).